The chain runs to 118 residues: V-type proton ATPase subunit G 1 (118 aa).

Alanine 2 carries the N-acetylalanine modification.

Belongs to the V-ATPase G subunit family. In terms of assembly, V-ATPase is a heteromultimeric enzyme made up of two complexes: the ATP-hydrolytic V1 complex and the proton translocation V0 complex. The V1 complex consists of three catalytic AB heterodimers that form a heterohexamer, three peripheral stalks each consisting of EG heterodimers, one central rotor including subunits D and F, and the regulatory subunits C and H. The proton translocation complex V0 consists of the proton transport subunit a, a ring of proteolipid subunits c9c'', rotary subunit d, subunits e and f, and the accessory subunits ATP6AP1/Ac45 and ATP6AP2/PRR. In terms of tissue distribution, kidney; localizes to early distal nephron, encompassing thick ascending limbs and distal convoluted tubules (at protein level). Ubiquitous.

The protein localises to the apical cell membrane. Its function is as follows. Subunit of the V1 complex of vacuolar(H+)-ATPase (V-ATPase), a multisubunit enzyme composed of a peripheral complex (V1) that hydrolyzes ATP and a membrane integral complex (V0) that translocates protons. V-ATPase is responsible for acidifying and maintaining the pH of intracellular compartments and in some cell types, is targeted to the plasma membrane, where it is responsible for acidifying the extracellular environment. In aerobic conditions, involved in intracellular iron homeostasis, thus triggering the activity of Fe(2+) prolyl hydroxylase (PHD) enzymes, and leading to HIF1A hydroxylation and subsequent proteasomal degradation. This Mus musculus (Mouse) protein is V-type proton ATPase subunit G 1 (Atp6v1g1).